We begin with the raw amino-acid sequence, 378 residues long: Erythronate-4-phosphate dehydrogenase (378 aa).

Residues serine 45 and threonine 66 each contribute to the substrate site. NAD(+)-binding residues include aspartate 146 and threonine 175. The active site involves arginine 208. Aspartate 232 provides a ligand contact to NAD(+). The active site involves glutamate 237. Residue histidine 254 is the Proton donor of the active site. Position 257 (glycine 257) interacts with NAD(+). Tyrosine 258 serves as a coordination point for substrate.

It belongs to the D-isomer specific 2-hydroxyacid dehydrogenase family. PdxB subfamily. Homodimer.

The protein localises to the cytoplasm. The catalysed reaction is 4-phospho-D-erythronate + NAD(+) = (R)-3-hydroxy-2-oxo-4-phosphooxybutanoate + NADH + H(+). The protein operates within cofactor biosynthesis; pyridoxine 5'-phosphate biosynthesis; pyridoxine 5'-phosphate from D-erythrose 4-phosphate: step 2/5. Functionally, catalyzes the oxidation of erythronate-4-phosphate to 3-hydroxy-2-oxo-4-phosphonooxybutanoate. In Escherichia coli O45:K1 (strain S88 / ExPEC), this protein is Erythronate-4-phosphate dehydrogenase.